The chain runs to 22 residues: Caerin-3.4 (22 aa).

K22 carries the lysine amide modification.

In terms of tissue distribution, expressed by the skin parotoid and/or rostral glands.

Its subcellular location is the secreted. Antibacterial peptide, that adopts an alpha helical conformation which can disrupt bacterial membranes. Each caerin displays a different antimicrobial specificity. This Ranoidea caerulea (Green tree frog) protein is Caerin-3.4.